A 982-amino-acid chain; its full sequence is GPMGPSGPRGFQGPPGEPGEPGASGPMGPRGPPGPPGKNGDDGEAGKPGRPGERGPPGPQGARGIPGTAGIPGMKGHRGFSGIDGAKGDAGPAGPKGEPGSPGENGAPGQMGPRGIPGERGRPGPTGPAGARGNDGATGAAGPPGPTGPAGPPGFPGAVGAKGEAGPQGARGSEGPQGVRGEPGPPGPAGAAGPAGNPGADGQPGAKGANGAPGIAGAPGFPGARGPSGPQGPSGPPGPKGNSGEPGAPGSKGDAGAKGEPGPTGVQGPPGPAGEEGKRGAGEPGPTGIPGPPGERGGPGSRGFPGADGVAGPKGPAGERGAPGPAGPKGSPGEAGRPGEAGIPGAKGITGSPGSPGPDGKTGPPGPAGQDGRPGPPGPPGARGQAGVMGFPGPKGAAGEPGKAGERGVPGPPGAVGPAGKDGEAGAQGPPGSAGPAGERGEQGPAGSPGFQGIPGPAGPPGESGKPGEQGVPGDIGAPGPSGARGERGFPGERGVQGPPGPAGPRGAGDAGAPGAPGSQGAPGIQGMPGERGAAGIPGPKGDRGDAGPKGADGSPGKDGVRGITGPIGPPGPAGAPGDKGESGPSGPAGPTGARGAPGDRGEPGPPGPAGFAGPPGADGQPGAKGEPGDAGAKGDAGPAGPAGPTGPPGPIGNVGAPGPKGARGSAGPPGATGFPGAAGRVGPPGPAGNAGPPGPPGPVGKKGPRGETGPAGRPGEVGPPGPPGPAGEKGSPGSDGPAGAPGTPGPQGIAGQRGVVGIPGQRGERGFPGIPGPSGEPGKQGPSGASGERGPPGPIGPPGIAGPPGESGREGAPGAEGSPGRDGSPGPKGDRGEAGPAGPPGAPGAPGAPGPVGPAGKSGDRGETGPAGPAGPIGPTGARGPAGPQGPRGDKGETGEQGDRGFSGIQGPPGPPGSPGEQGPAGASGPAGPRGPPGSAGAPGKDGINGIPGPIGPPGPRGRTGPAGPRGPPGPPGAPGPPGPP.

Positions 1–982 are disordered; that stretch reads GPMGPSGPRG…PGAPGPPGPP (982 aa). Over residues 8-27 the composition is skewed to low complexity; that stretch reads PRGFQGPPGEPGEPGASGPM. Positions 39–53 are enriched in basic and acidic residues; it reads NGDDGEAGKPGRPGE. S81 carries the phosphoserine modification. Composition is skewed to low complexity over residues 89-105 and 128-141; these read DAGP…PGEN and PAGA…TGAA. Residues 143–155 are compositionally biased toward pro residues; that stretch reads PPGPTGPAGPPGF. The segment covering 189–228 has biased composition (low complexity); sequence AGAAGPAGNPGADGQPGAKGANGAPGIAGAPGFPGARGPS. The span at 294–303 shows a compositional bias: gly residues; the sequence is GERGGPGSRG. Low complexity-rich tracts occupy residues 304–335, 347–373, 382–401, 425–437, 513–526, 583–597, 610–640, 666–682, and 727–751; these read FPGA…PGEA, KGIT…QDGR, ARGQ…AGEP, AGAQ…AGPA, APGA…PGIQ, SGPS…ARGA, AGFA…AGPA, SAGP…AGRV, and AGEK…QGIA. S586 carries the phosphoserine modification. 2 stretches are compositionally biased toward pro residues: residues 792 to 802 and 838 to 853; these read PPGPIGPPGIA and AGPP…PGPV. The span at 874 to 888 shows a compositional bias: low complexity; that stretch reads IGPTGARGPAGPQGP. The span at 889–900 shows a compositional bias: basic and acidic residues; that stretch reads RGDKGETGEQGD. Residues 916–940 are compositionally biased toward low complexity; sequence PGEQGPAGASGPAGPRGPPGSAGAP. Residues 966–982 are compositionally biased toward pro residues; it reads PRGPPGPPGAPGPPGPP.

It belongs to the fibrillar collagen family. In terms of assembly, trimers of one alpha 2(I) and two alpha 1(I) chains. In terms of processing, prolines at the third position of the tripeptide repeating unit (G-X-Y) are hydroxylated in some or all of the chains. In terms of tissue distribution, forms the fibrils of tendon, ligaments and bones. In bones, the fibrils are mineralized with calcium hydroxyapatite.

Its subcellular location is the secreted. It localises to the extracellular space. The protein resides in the extracellular matrix. Its function is as follows. Type I collagen is a member of group I collagen (fibrillar forming collagen). This is Collagen alpha-1(I) chain from Toxodon sp.